Consider the following 341-residue polypeptide: Anthranilate phosphoribosyltransferase (341 aa).

5-phospho-alpha-D-ribose 1-diphosphate is bound by residues glycine 79, 82 to 83 (GD), threonine 87, 89 to 92 (NIST), 107 to 115 (KHGNRAVSS), and serine 119. Anthranilate is bound at residue glycine 79. Serine 91 serves as a coordination point for Mg(2+). Asparagine 110 lines the anthranilate pocket. Arginine 165 contacts anthranilate. Mg(2+) is bound by residues aspartate 224 and glutamate 225.

It belongs to the anthranilate phosphoribosyltransferase family. As to quaternary structure, homodimer. Mg(2+) serves as cofactor.

It catalyses the reaction N-(5-phospho-beta-D-ribosyl)anthranilate + diphosphate = 5-phospho-alpha-D-ribose 1-diphosphate + anthranilate. Its pathway is amino-acid biosynthesis; L-tryptophan biosynthesis; L-tryptophan from chorismate: step 2/5. Catalyzes the transfer of the phosphoribosyl group of 5-phosphorylribose-1-pyrophosphate (PRPP) to anthranilate to yield N-(5'-phosphoribosyl)-anthranilate (PRA). In Bacillus mycoides (strain KBAB4) (Bacillus weihenstephanensis), this protein is Anthranilate phosphoribosyltransferase.